Consider the following 199-residue polypeptide: Photosystem I reaction center subunit XI (199 aa).

2 consecutive transmembrane segments (helical) span residues 108 to 128 and 165 to 185; these read VTAGLLSAIGAVHIMTALLVL and FWLGGCGGAVFAWLLVGTLHL.

Belongs to the PsaL family.

Its subcellular location is the cellular thylakoid membrane. In Prochlorococcus marinus (strain MIT 9215), this protein is Photosystem I reaction center subunit XI.